The chain runs to 693 residues: Protein-glutamine gamma-glutamyltransferase E (693 aa).

Tyr-111 carries the phosphotyrosine modification. Thr-112 is modified (phosphothreonine). Ala-222, Asn-225, Asn-227, and Asp-228 together coordinate Ca(2+). The active site involves Cys-273. Ca(2+)-binding residues include Asp-302, Asp-304, Asn-306, Ser-308, and Asp-325. Active-site residues include His-331 and Asp-354. Residues Asn-394, Thr-416, Glu-444, and Glu-449 each contribute to the Ca(2+) site. The disordered stretch occupies residues Lys-455–Ser-482.

The protein belongs to the transglutaminase superfamily. Transglutaminase family. Consists of two polypeptide chains, which are synthesized as a precursor form of a single polypeptide. Ca(2+) serves as cofactor. In terms of processing, activated by proteolytic processing. In vitro activation is commonly achieved by cleavage with dispase, a neutral bacterial protease. Physiological activation may be catalyzed by CTSL and, to a lesser extent, by CTSS.

It localises to the cytoplasm. It catalyses the reaction L-glutaminyl-[protein] + L-lysyl-[protein] = [protein]-L-lysyl-N(6)-5-L-glutamyl-[protein] + NH4(+). In terms of biological role, catalyzes the calcium-dependent formation of isopeptide cross-links between glutamine and lysine residues in various proteins, as well as the conjugation of polyamines to proteins. Involved in the formation of the cornified envelope (CE), a specialized component consisting of covalent cross-links of proteins beneath the plasma membrane of terminally differentiated keratinocytes. Catalyzes small proline-rich proteins and LOR cross-linking to form small interchain oligomers, which are further cross-linked by TGM1 onto the growing CE scaffold. In hair follicles, involved in cross-linking structural proteins to hardening the inner root sheath. The polypeptide is Protein-glutamine gamma-glutamyltransferase E (Tgm3) (Rattus norvegicus (Rat)).